The following is a 485-amino-acid chain: UDP-N-acetylmuramate--L-alanine ligase (485 aa).

Position 129–135 (129–135 (GTHGKTT)) interacts with ATP.

Belongs to the MurCDEF family.

It is found in the cytoplasm. It carries out the reaction UDP-N-acetyl-alpha-D-muramate + L-alanine + ATP = UDP-N-acetyl-alpha-D-muramoyl-L-alanine + ADP + phosphate + H(+). The protein operates within cell wall biogenesis; peptidoglycan biosynthesis. Its function is as follows. Cell wall formation. This is UDP-N-acetylmuramate--L-alanine ligase from Vibrio parahaemolyticus serotype O3:K6 (strain RIMD 2210633).